We begin with the raw amino-acid sequence, 183 residues long: MQDYKIKIENVVASTQIGENIDLNKISREIKDSEYKPKQFPGLVLRTKEPKAAALVFRSGKVVCTGSKSVEDARRAVKQIVKMLKEIGISVIDEPEVKVQNIVASADLGVDLNLNAIAIGLGLENIEYEPEQFPGLVYRLDNPRVVVLIFGSGKMVVTGGKSPEDARKAVERISEELRTLGLM.

2 tandem repeats follow at residues 8–84 (IENV…VKML) and 99–177 (VQNI…SEEL).

It belongs to the TBP family.

Functionally, general factor that plays a role in the activation of archaeal genes transcribed by RNA polymerase. Binds specifically to the TATA box promoter element which lies close to the position of transcription initiation. This is TATA-box-binding protein (tbp) from Archaeoglobus fulgidus (strain ATCC 49558 / DSM 4304 / JCM 9628 / NBRC 100126 / VC-16).